We begin with the raw amino-acid sequence, 323 residues long: CTD kinase subunit beta (323 aa).

It belongs to the cyclin family. In terms of assembly, CTDK-I consists of three subunits, CTK1, CTK2 and CTK3 (also called alpha, beta and gamma). Interacts with CTK1. Heterodimerization with CTK3 is required to protect this subunit from degradation. Post-translationally, phosphorylated. Ubiquitinated. Phosphorylation and ubiquitination lead to degradation in growth-related way by the ubiquitin-proteasome pathway. Neither phosphorylation nor degradation requires association with CTK1.

It localises to the nucleus. The protein localises to the nucleolus. In terms of biological role, cyclin subunit of the CTDK-I complex, which hyperphosphorylates the C-terminal heptapeptide repeat domain (CTD) of the largest RNA polymerase II subunit. CTDK-I phosphorylates 'Ser-5' if the CTD substrate is not phosphorylated at 'Ser-5', but will phosphorylate 'Ser-2' of a CTD substrate if 'Ser-5' is already phosphorylated. CTDK-I is also more reactive toward substrates that are prephosphorylated at 'Ser-2' or 'Ser-5' compared with an unphosphorylated CTD substrate, therefore efficiently creating doubly phosphorylated CTD repeats. Involved in RNA polymerase II transcriptional elongation, and as part of the CTDK-I complex, pre-mRNA 3'-end processing and SET2 mediated H3K36 methylation. Together with CTK3, required for CTK1 CTD kinase activation. Required for DNA damage induced transcription. Involved in the adaptation to alternative carbon sources, including galactose, glycerol and ethanol, but not raffinose. Required for the integrity of the rDNA locus. The sequence is that of CTD kinase subunit beta (CTK2) from Saccharomyces cerevisiae (strain ATCC 204508 / S288c) (Baker's yeast).